We begin with the raw amino-acid sequence, 109 residues long: Iron-sulfur cluster assembly protein CyaY (109 aa).

This sequence belongs to the frataxin family.

Involved in iron-sulfur (Fe-S) cluster assembly. May act as a regulator of Fe-S biogenesis. The sequence is that of Iron-sulfur cluster assembly protein CyaY from Shewanella baltica (strain OS155 / ATCC BAA-1091).